Here is a 315-residue protein sequence, read N- to C-terminus: Tetraacyldisaccharide 4'-kinase (315 aa).

45–52 (SVGGSGKT) is an ATP binding site.

The protein belongs to the LpxK family.

The catalysed reaction is a lipid A disaccharide + ATP = a lipid IVA + ADP + H(+). Its pathway is glycolipid biosynthesis; lipid IV(A) biosynthesis; lipid IV(A) from (3R)-3-hydroxytetradecanoyl-[acyl-carrier-protein] and UDP-N-acetyl-alpha-D-glucosamine: step 6/6. Functionally, transfers the gamma-phosphate of ATP to the 4'-position of a tetraacyldisaccharide 1-phosphate intermediate (termed DS-1-P) to form tetraacyldisaccharide 1,4'-bis-phosphate (lipid IVA). The sequence is that of Tetraacyldisaccharide 4'-kinase from Aquifex aeolicus (strain VF5).